The chain runs to 239 residues: UDP-2,3-diacylglucosamine hydrolase (239 aa).

Aspartate 8, histidine 10, aspartate 41, asparagine 78, and histidine 113 together coordinate Mn(2+). A substrate-binding site is contributed by asparagine 78–arginine 79. Aspartate 121, serine 159, asparagine 163, lysine 166, and histidine 194 together coordinate substrate. Mn(2+)-binding residues include histidine 194 and histidine 196.

The protein belongs to the LpxH family. Mn(2+) serves as cofactor.

It is found in the cell inner membrane. It catalyses the reaction UDP-2-N,3-O-bis[(3R)-3-hydroxytetradecanoyl]-alpha-D-glucosamine + H2O = 2-N,3-O-bis[(3R)-3-hydroxytetradecanoyl]-alpha-D-glucosaminyl 1-phosphate + UMP + 2 H(+). The protein operates within glycolipid biosynthesis; lipid IV(A) biosynthesis; lipid IV(A) from (3R)-3-hydroxytetradecanoyl-[acyl-carrier-protein] and UDP-N-acetyl-alpha-D-glucosamine: step 4/6. Functionally, hydrolyzes the pyrophosphate bond of UDP-2,3-diacylglucosamine to yield 2,3-diacylglucosamine 1-phosphate (lipid X) and UMP by catalyzing the attack of water at the alpha-P atom. Involved in the biosynthesis of lipid A, a phosphorylated glycolipid that anchors the lipopolysaccharide to the outer membrane of the cell. This Shewanella sp. (strain MR-4) protein is UDP-2,3-diacylglucosamine hydrolase.